A 98-amino-acid polypeptide reads, in one-letter code: NADH-ubiquinone oxidoreductase chain 4L (98 aa).

A run of 3 helical transmembrane segments spans residues 1 to 21 (MPVVYVNIFLAFIVSLVGLLI), 29 to 49 (SLLCLEGMMLSLFVMLTVTVL), and 61 to 81 (IILLVFAACEAALGLSLLVMV).

The protein belongs to the complex I subunit 4L family. As to quaternary structure, core subunit of respiratory chain NADH dehydrogenase (Complex I) which is composed of 45 different subunits.

It is found in the mitochondrion inner membrane. It carries out the reaction a ubiquinone + NADH + 5 H(+)(in) = a ubiquinol + NAD(+) + 4 H(+)(out). In terms of biological role, core subunit of the mitochondrial membrane respiratory chain NADH dehydrogenase (Complex I) which catalyzes electron transfer from NADH through the respiratory chain, using ubiquinone as an electron acceptor. Part of the enzyme membrane arm which is embedded in the lipid bilayer and involved in proton translocation. This chain is NADH-ubiquinone oxidoreductase chain 4L (MT-ND4L), found in Ursus maritimus (Polar bear).